Reading from the N-terminus, the 150-residue chain is Large ribosomal subunit protein bL9 (150 aa).

The protein belongs to the bacterial ribosomal protein bL9 family.

Binds to the 23S rRNA. The chain is Large ribosomal subunit protein bL9 from Neisseria meningitidis serogroup B (strain ATCC BAA-335 / MC58).